The following is a 311-amino-acid chain: Pyrimidine-specific ribonucleoside hydrolase RihA (311 aa).

Residue histidine 240 is part of the active site.

It belongs to the IUNH family. RihA subfamily.

Its function is as follows. Hydrolyzes cytidine or uridine to ribose and cytosine or uracil, respectively. The protein is Pyrimidine-specific ribonucleoside hydrolase RihA of Salmonella typhimurium (strain LT2 / SGSC1412 / ATCC 700720).